We begin with the raw amino-acid sequence, 89 residues long: Small ribosomal subunit protein uS14A (89 aa).

Belongs to the universal ribosomal protein uS14 family. In terms of assembly, contacts proteins S3 and S10. Part of the 30S ribosomal subunit.

Binds 16S rRNA, required for the assembly of 30S particles and may also be responsible for determining the conformation of the 16S rRNA at the A site. In terms of biological role, non-essential protein. A second form of uS14, it can integrate into the 30S subunit where it partially compensates for loss of the major uS14 protein (AC P12878) in restoring 70S formation, although it does not seem to be incorporated into the ribosome as well as the major uS14. This Bacillus subtilis (strain 168) protein is Small ribosomal subunit protein uS14A.